The chain runs to 286 residues: Bifunctional protein FolD (286 aa).

NADP(+) is bound by residues 164–166, isoleucine 189, and isoleucine 230; that span reads GAS.

This sequence belongs to the tetrahydrofolate dehydrogenase/cyclohydrolase family. Homodimer.

The catalysed reaction is (6R)-5,10-methylene-5,6,7,8-tetrahydrofolate + NADP(+) = (6R)-5,10-methenyltetrahydrofolate + NADPH. It catalyses the reaction (6R)-5,10-methenyltetrahydrofolate + H2O = (6R)-10-formyltetrahydrofolate + H(+). The protein operates within one-carbon metabolism; tetrahydrofolate interconversion. Its function is as follows. Catalyzes the oxidation of 5,10-methylenetetrahydrofolate to 5,10-methenyltetrahydrofolate and then the hydrolysis of 5,10-methenyltetrahydrofolate to 10-formyltetrahydrofolate. This chain is Bifunctional protein FolD, found in Wolinella succinogenes (strain ATCC 29543 / DSM 1740 / CCUG 13145 / JCM 31913 / LMG 7466 / NCTC 11488 / FDC 602W) (Vibrio succinogenes).